The primary structure comprises 306 residues: Putative S-adenosyl-L-methionine-dependent methyltransferase FRAAL5401 (306 aa).

Residues aspartate 126 and 155-156 (DL) each bind S-adenosyl-L-methionine. A disordered region spans residues 201-225 (LSAPESRVATENRPNPKPGDEDRTK).

This sequence belongs to the UPF0677 family.

Functionally, exhibits S-adenosyl-L-methionine-dependent methyltransferase activity. In Frankia alni (strain DSM 45986 / CECT 9034 / ACN14a), this protein is Putative S-adenosyl-L-methionine-dependent methyltransferase FRAAL5401.